The sequence spans 312 residues: DNA-directed RNA polymerase subunit alpha (312 aa).

An alpha N-terminal domain (alpha-NTD) region spans residues 1–226; it reads MIEFEKPKIT…DHLNLFVDLS (226 aa). The alpha C-terminal domain (alpha-CTD) stretch occupies residues 243–312; sequence TERVLDKIIE…ELGLSLKKRK (70 aa).

The protein belongs to the RNA polymerase alpha chain family. Homodimer. The RNAP catalytic core consists of 2 alpha, 1 beta, 1 beta' and 1 omega subunit. When a sigma factor is associated with the core the holoenzyme is formed, which can initiate transcription.

It carries out the reaction RNA(n) + a ribonucleoside 5'-triphosphate = RNA(n+1) + diphosphate. In terms of biological role, DNA-dependent RNA polymerase catalyzes the transcription of DNA into RNA using the four ribonucleoside triphosphates as substrates. This Lactococcus lactis subsp. cremoris (strain MG1363) protein is DNA-directed RNA polymerase subunit alpha.